The chain runs to 233 residues: Phosphoribosylformylglycinamidine synthase subunit PurQ (233 aa).

A Glutamine amidotransferase type-1 domain is found at 3–233 (SAVLVFPGIN…GLVAHLERAA (231 aa)). C87 (nucleophile) is an active-site residue. Active-site residues include H204 and E206.

As to quaternary structure, part of the FGAM synthase complex composed of 1 PurL, 1 PurQ and 2 PurS subunits.

It is found in the cytoplasm. The catalysed reaction is N(2)-formyl-N(1)-(5-phospho-beta-D-ribosyl)glycinamide + L-glutamine + ATP + H2O = 2-formamido-N(1)-(5-O-phospho-beta-D-ribosyl)acetamidine + L-glutamate + ADP + phosphate + H(+). It carries out the reaction L-glutamine + H2O = L-glutamate + NH4(+). Its pathway is purine metabolism; IMP biosynthesis via de novo pathway; 5-amino-1-(5-phospho-D-ribosyl)imidazole from N(2)-formyl-N(1)-(5-phospho-D-ribosyl)glycinamide: step 1/2. Functionally, part of the phosphoribosylformylglycinamidine synthase complex involved in the purines biosynthetic pathway. Catalyzes the ATP-dependent conversion of formylglycinamide ribonucleotide (FGAR) and glutamine to yield formylglycinamidine ribonucleotide (FGAM) and glutamate. The FGAM synthase complex is composed of three subunits. PurQ produces an ammonia molecule by converting glutamine to glutamate. PurL transfers the ammonia molecule to FGAR to form FGAM in an ATP-dependent manner. PurS interacts with PurQ and PurL and is thought to assist in the transfer of the ammonia molecule from PurQ to PurL. The polypeptide is Phosphoribosylformylglycinamidine synthase subunit PurQ (Nitrobacter winogradskyi (strain ATCC 25391 / DSM 10237 / CIP 104748 / NCIMB 11846 / Nb-255)).